Reading from the N-terminus, the 480-residue chain is Protein nucleotidyltransferase YdiU (480 aa).

G86, G88, R89, K109, D121, G122, R172, and R179 together coordinate ATP. Residue D248 is the Proton acceptor of the active site. Residues N249 and D258 each contribute to the Mg(2+) site. D258 is an ATP binding site.

The protein belongs to the SELO family. Mg(2+) is required as a cofactor. Mn(2+) serves as cofactor.

The catalysed reaction is L-seryl-[protein] + ATP = 3-O-(5'-adenylyl)-L-seryl-[protein] + diphosphate. It catalyses the reaction L-threonyl-[protein] + ATP = 3-O-(5'-adenylyl)-L-threonyl-[protein] + diphosphate. It carries out the reaction L-tyrosyl-[protein] + ATP = O-(5'-adenylyl)-L-tyrosyl-[protein] + diphosphate. The enzyme catalyses L-histidyl-[protein] + UTP = N(tele)-(5'-uridylyl)-L-histidyl-[protein] + diphosphate. The catalysed reaction is L-seryl-[protein] + UTP = O-(5'-uridylyl)-L-seryl-[protein] + diphosphate. It catalyses the reaction L-tyrosyl-[protein] + UTP = O-(5'-uridylyl)-L-tyrosyl-[protein] + diphosphate. Nucleotidyltransferase involved in the post-translational modification of proteins. It can catalyze the addition of adenosine monophosphate (AMP) or uridine monophosphate (UMP) to a protein, resulting in modifications known as AMPylation and UMPylation. The polypeptide is Protein nucleotidyltransferase YdiU (Enterobacter sp. (strain 638)).